The following is a 360-amino-acid chain: MLVWLANFLESYVSGFGVFQYLTLRAILGVLTALGLSMVLGPWVIRKLNELQIGQAIRDDGPQSHLSKSGTPTMGGTLILFSIVTATLLWADLSNRYVLAVLFVTITFGLIGWVDDYRKVVEKNSKGLPAKWKYFWQSACGFIVAIALFVTAQTPAETTLYIPFFKNVAWQMGVLYVFVTYLMIVGFSNAVNLTDGLDGLAIMPTVMVGSALGVIAYLVGNANFSEYLHIAFVPGSGELVVYCAALAGAGLGFLWFNTYPAQVFMGDVGALALGAALGVIAVIVRHEIVFFIMSGIFVMETVSVILQVGSYKLTGRRIFRMAPLHHHFELKGWPEPRVIVRFWIITVILVLFGLATLKIR.

Helical transmembrane passes span R25–I45, T73–L93, Y97–Y117, W132–A152, V168–S188, G199–V219, S236–F256, V263–I283, I288–V308, and I339–I359.

It belongs to the glycosyltransferase 4 family. MraY subfamily. Requires Mg(2+) as cofactor.

It localises to the cell inner membrane. The catalysed reaction is UDP-N-acetyl-alpha-D-muramoyl-L-alanyl-gamma-D-glutamyl-meso-2,6-diaminopimeloyl-D-alanyl-D-alanine + di-trans,octa-cis-undecaprenyl phosphate = di-trans,octa-cis-undecaprenyl diphospho-N-acetyl-alpha-D-muramoyl-L-alanyl-D-glutamyl-meso-2,6-diaminopimeloyl-D-alanyl-D-alanine + UMP. The protein operates within cell wall biogenesis; peptidoglycan biosynthesis. Catalyzes the initial step of the lipid cycle reactions in the biosynthesis of the cell wall peptidoglycan: transfers peptidoglycan precursor phospho-MurNAc-pentapeptide from UDP-MurNAc-pentapeptide onto the lipid carrier undecaprenyl phosphate, yielding undecaprenyl-pyrophosphoryl-MurNAc-pentapeptide, known as lipid I. The polypeptide is Phospho-N-acetylmuramoyl-pentapeptide-transferase (Teredinibacter turnerae (strain ATCC 39867 / T7901)).